Reading from the N-terminus, the 821-residue chain is DNA gyrase subunit A (821 aa).

In terms of domain architecture, Topo IIA-type catalytic spans 35-500 (LPDVRDGLKP…GLETIEDEDL (466 aa)). The O-(5'-phospho-DNA)-tyrosine intermediate role is filled by Tyr123. A GyrA-box motif is present at residues 527 to 533 (QKRGGKG).

This sequence belongs to the type II topoisomerase GyrA/ParC subunit family. As to quaternary structure, heterotetramer, composed of two GyrA and two GyrB chains. In the heterotetramer, GyrA contains the active site tyrosine that forms a transient covalent intermediate with DNA, while GyrB binds cofactors and catalyzes ATP hydrolysis.

Its subcellular location is the cytoplasm. It catalyses the reaction ATP-dependent breakage, passage and rejoining of double-stranded DNA.. A type II topoisomerase that negatively supercoils closed circular double-stranded (ds) DNA in an ATP-dependent manner to modulate DNA topology and maintain chromosomes in an underwound state. Negative supercoiling favors strand separation, and DNA replication, transcription, recombination and repair, all of which involve strand separation. Also able to catalyze the interconversion of other topological isomers of dsDNA rings, including catenanes and knotted rings. Type II topoisomerases break and join 2 DNA strands simultaneously in an ATP-dependent manner. This Bacillus subtilis (strain 168) protein is DNA gyrase subunit A.